Reading from the N-terminus, the 204-residue chain is Leucyl/phenylalanyl-tRNA--protein transferase (204 aa).

This sequence belongs to the L/F-transferase family.

The protein localises to the cytoplasm. The catalysed reaction is N-terminal L-lysyl-[protein] + L-leucyl-tRNA(Leu) = N-terminal L-leucyl-L-lysyl-[protein] + tRNA(Leu) + H(+). The enzyme catalyses N-terminal L-arginyl-[protein] + L-leucyl-tRNA(Leu) = N-terminal L-leucyl-L-arginyl-[protein] + tRNA(Leu) + H(+). It catalyses the reaction L-phenylalanyl-tRNA(Phe) + an N-terminal L-alpha-aminoacyl-[protein] = an N-terminal L-phenylalanyl-L-alpha-aminoacyl-[protein] + tRNA(Phe). Functions in the N-end rule pathway of protein degradation where it conjugates Leu, Phe and, less efficiently, Met from aminoacyl-tRNAs to the N-termini of proteins containing an N-terminal arginine or lysine. The sequence is that of Leucyl/phenylalanyl-tRNA--protein transferase from Brucella anthropi (strain ATCC 49188 / DSM 6882 / CCUG 24695 / JCM 21032 / LMG 3331 / NBRC 15819 / NCTC 12168 / Alc 37) (Ochrobactrum anthropi).